Reading from the N-terminus, the 179-residue chain is NADH dehydrogenase [ubiquinone] 1 beta subcomplex subunit 9 (179 aa).

Residue Ala2 is modified to N-acetylalanine. At Ser85 the chain carries Phosphoserine. Positions 136 to 162 (EVKQLQEETPPGGPLTEALPPARKEGD) are disordered.

The protein belongs to the complex I LYR family. As to quaternary structure, mammalian complex I is composed of 45 different subunits.

It localises to the mitochondrion inner membrane. In terms of biological role, accessory subunit of the mitochondrial membrane respiratory chain NADH dehydrogenase (Complex I), that is believed to be not involved in catalysis. Complex I functions in the transfer of electrons from NADH to the respiratory chain. The immediate electron acceptor for the enzyme is believed to be ubiquinone. The protein is NADH dehydrogenase [ubiquinone] 1 beta subcomplex subunit 9 (NDUFB9) of Pan troglodytes (Chimpanzee).